The following is a 282-amino-acid chain: Parvulin-like PPIase (282 aa).

The signal sequence occupies residues 1-20 (MKKLSVIFLSVSMLSSIAFG). Positions 138 to 231 (KEQIKVAHIL…FGWHIIKVLE (94 aa)) constitute a PpiC domain.

Belongs to the PpiC/parvulin rotamase family.

The protein localises to the cell outer membrane. It catalyses the reaction [protein]-peptidylproline (omega=180) = [protein]-peptidylproline (omega=0). The protein is Parvulin-like PPIase (plp) of Rickettsia prowazekii (strain Madrid E).